The following is a 307-amino-acid chain: Ribosomal RNA small subunit methyltransferase H (307 aa).

Residues 33–35, Asp-51, Phe-82, Asp-96, and Gln-103 contribute to the S-adenosyl-L-methionine site; that span reads GGY.

Belongs to the methyltransferase superfamily. RsmH family.

It localises to the cytoplasm. The catalysed reaction is cytidine(1402) in 16S rRNA + S-adenosyl-L-methionine = N(4)-methylcytidine(1402) in 16S rRNA + S-adenosyl-L-homocysteine + H(+). Its function is as follows. Specifically methylates the N4 position of cytidine in position 1402 (C1402) of 16S rRNA. This Rickettsia massiliae (strain Mtu5) protein is Ribosomal RNA small subunit methyltransferase H.